A 199-amino-acid chain; its full sequence is Recombination protein RecR (199 aa).

The segment at 57–72 (CPICGNITEKEICDIC) adopts a C4-type zinc-finger fold. The 97-residue stretch at 80-176 (TTIMVVEQPK…KVTRLAAGLS (97 aa)) folds into the Toprim domain.

This sequence belongs to the RecR family.

May play a role in DNA repair. It seems to be involved in an RecBC-independent recombinational process of DNA repair. It may act with RecF and RecO. This is Recombination protein RecR from Lactobacillus acidophilus (strain ATCC 700396 / NCK56 / N2 / NCFM).